Reading from the N-terminus, the 475-residue chain is Ribulose bisphosphate carboxylase large chain (475 aa).

The propeptide occupies 1–2 (MS). Position 3 is an N-acetylproline (proline 3). An N6,N6,N6-trimethyllysine modification is found at lysine 14. Substrate is bound by residues asparagine 123 and threonine 173. Catalysis depends on lysine 175, which acts as the Proton acceptor. Substrate is bound at residue lysine 177. Positions 201, 203, and 204 each coordinate Mg(2+). N6-carboxylysine is present on lysine 201. The active-site Proton acceptor is histidine 294. Residues arginine 295, histidine 327, and serine 379 each coordinate substrate.

Belongs to the RuBisCO large chain family. Type I subfamily. As to quaternary structure, heterohexadecamer of 8 large chains and 8 small chains; disulfide-linked. The disulfide link is formed within the large subunit homodimers. The cofactor is Mg(2+). Post-translationally, the disulfide bond which can form in the large chain dimeric partners within the hexadecamer appears to be associated with oxidative stress and protein turnover.

Its subcellular location is the plastid. It localises to the chloroplast. It catalyses the reaction 2 (2R)-3-phosphoglycerate + 2 H(+) = D-ribulose 1,5-bisphosphate + CO2 + H2O. The catalysed reaction is D-ribulose 1,5-bisphosphate + O2 = 2-phosphoglycolate + (2R)-3-phosphoglycerate + 2 H(+). Functionally, ruBisCO catalyzes two reactions: the carboxylation of D-ribulose 1,5-bisphosphate, the primary event in carbon dioxide fixation, as well as the oxidative fragmentation of the pentose substrate in the photorespiration process. Both reactions occur simultaneously and in competition at the same active site. In Cucumis sativus (Cucumber), this protein is Ribulose bisphosphate carboxylase large chain (rbcL).